Consider the following 260-residue polypeptide: Phosphate import ATP-binding protein PstB 1 (260 aa).

In terms of domain architecture, ABC transporter spans 13-255; it reads VRVRDLNLWY…PHTKKAEDYI (243 aa). Residue 45–52 coordinates ATP; it reads GPSGCGKS.

It belongs to the ABC transporter superfamily. Phosphate importer (TC 3.A.1.7) family. As to quaternary structure, the complex is composed of two ATP-binding proteins (PstB), two transmembrane proteins (PstC and PstA) and a solute-binding protein (PstS).

Its subcellular location is the cell inner membrane. It carries out the reaction phosphate(out) + ATP + H2O = ADP + 2 phosphate(in) + H(+). In terms of biological role, part of the ABC transporter complex PstSACB involved in phosphate import. Responsible for energy coupling to the transport system. The sequence is that of Phosphate import ATP-binding protein PstB 1 from Chromohalobacter salexigens (strain ATCC BAA-138 / DSM 3043 / CIP 106854 / NCIMB 13768 / 1H11).